A 398-amino-acid chain; its full sequence is Succinate--CoA ligase [ADP-forming] subunit beta (398 aa).

The ATP-grasp domain maps to 9 to 254; the sequence is KALLKSYGAP…TTEEDEKEIE (246 aa). Residues Lys46, 53 to 55, Glu109, Ala112, and Glu117 each bind ATP; that span reads GRG. Mg(2+) contacts are provided by Asn209 and Asp223. Substrate is bound by residues Asn274 and 331 to 333; that span reads GIM.

This sequence belongs to the succinate/malate CoA ligase beta subunit family. Heterotetramer of two alpha and two beta subunits. It depends on Mg(2+) as a cofactor.

The catalysed reaction is succinate + ATP + CoA = succinyl-CoA + ADP + phosphate. It carries out the reaction GTP + succinate + CoA = succinyl-CoA + GDP + phosphate. It participates in carbohydrate metabolism; tricarboxylic acid cycle; succinate from succinyl-CoA (ligase route): step 1/1. In terms of biological role, succinyl-CoA synthetase functions in the citric acid cycle (TCA), coupling the hydrolysis of succinyl-CoA to the synthesis of either ATP or GTP and thus represents the only step of substrate-level phosphorylation in the TCA. The beta subunit provides nucleotide specificity of the enzyme and binds the substrate succinate, while the binding sites for coenzyme A and phosphate are found in the alpha subunit. The sequence is that of Succinate--CoA ligase [ADP-forming] subunit beta from Sinorhizobium medicae (strain WSM419) (Ensifer medicae).